A 309-amino-acid chain; its full sequence is Cytochrome c biogenesis protein CcsA (309 aa).

The next 8 helical transmembrane spans lie at 18–38 (LGIL…GAVF), 43–63 (FFIV…QLLF), 67–87 (ISGH…AWGI), 102–122 (IIPS…CFVL), 148–168 (VMLS…VLFI), 216–236 (SILI…VWAN), 250–267 (TWAF…HMRI), and 279–299 (LATS…FLGI).

It belongs to the CcmF/CycK/Ccl1/NrfE/CcsA family. May interact with ccs1.

Its subcellular location is the cellular thylakoid membrane. Functionally, required during biogenesis of c-type cytochromes (cytochrome c6 and cytochrome f) at the step of heme attachment. This Prochlorococcus marinus (strain MIT 9312) protein is Cytochrome c biogenesis protein CcsA.